Here is a 638-residue protein sequence, read N- to C-terminus: Sodium- and chloride-dependent glycine transporter 1 (638 aa).

The disordered stretch occupies residues 1–29; that stretch reads MAAAQGPVAPSSLEQNGAVPSEATKKDQN. Residues 1–40 are Cytoplasmic-facing; it reads MAAAQGPVAPSSLEQNGAVPSEATKKDQNLKRGNWGNQIE. 3 helical membrane passes run 41–61, 69–88, and 112–132; these read FVLT…FPYL, AFMF…LFFM, and GVGY…NVVI. The Extracellular portion of the chain corresponds to 133–219; it reads CIAFYYFFSS…DDIGNFGEVR (87 aa). Residues N169, N172, N182, and N188 are each glycosylated (N-linked (GlcNAc...) asparagine). Helical transmembrane passes span 220–238, 247–264, 300–317, 329–350, 383–402, 431–449, 465–485, 506–525, and 544–562; these read LPLL…LCLI, VVYF…ILFI, IFYS…MASY, VIIS…FSIL, LPIS…LLGL, YVTL…PLTS, SFSL…IYGH, ICWR…FSVI, and IGFL…YALF. The Cytoplasmic portion of the chain corresponds to 563–638; sequence QFCRTDGDTL…GSSRFQDSRI (76 aa). Residues 597-638 are disordered; the sequence is RYAPTTTPSPEDGLEVQPLHPDKAQIPMVGSNGSSRFQDSRI. Phosphothreonine is present on T603. Phosphoserine occurs at positions 605 and 630. The segment at 627–638 is essential for interaction with EXOC1; that stretch reads SNGSSRFQDSRI. Polar residues predominate over residues 627-638; the sequence is SNGSSRFQDSRI.

It belongs to the sodium:neurotransmitter symporter (SNF) (TC 2.A.22) family. SLC6A9 subfamily. As to quaternary structure, interacts with EXOC1; interaction increases the transporter capacity of SLC6A9 probably by promoting its insertion into the cell membrane. Interacts with EXOC3 and EXOC4.

The protein resides in the cell membrane. It carries out the reaction glycine(out) + chloride(out) + 2 Na(+)(out) = glycine(in) + chloride(in) + 2 Na(+)(in). Sodium- and chloride-dependent glycine transporter which is essential for regulating glycine concentrations at inhibitory glycinergic synapses. The chain is Sodium- and chloride-dependent glycine transporter 1 (SLC6A9) from Bos taurus (Bovine).